Here is a 508-residue protein sequence, read N- to C-terminus: Photosystem II CP47 reaction center protein (508 aa).

The next 6 helical transmembrane spans lie at 21 to 36 (SVHI…WAGS), 101 to 115 (IVFS…IWHW), 140 to 156 (GIHL…FGAF), 203 to 218 (IAAG…FHLS), 237 to 252 (VLSS…AFVV), and 457 to 472 (SFAL…HGAR).

Belongs to the PsbB/PsbC family. PsbB subfamily. As to quaternary structure, PSII is composed of 1 copy each of membrane proteins PsbA, PsbB, PsbC, PsbD, PsbE, PsbF, PsbH, PsbI, PsbJ, PsbK, PsbL, PsbM, PsbT, PsbX, PsbY, PsbZ, Psb30/Ycf12, at least 3 peripheral proteins of the oxygen-evolving complex and a large number of cofactors. It forms dimeric complexes. Binds multiple chlorophylls. PSII binds additional chlorophylls, carotenoids and specific lipids. is required as a cofactor.

The protein resides in the plastid. It localises to the chloroplast thylakoid membrane. One of the components of the core complex of photosystem II (PSII). It binds chlorophyll and helps catalyze the primary light-induced photochemical processes of PSII. PSII is a light-driven water:plastoquinone oxidoreductase, using light energy to abstract electrons from H(2)O, generating O(2) and a proton gradient subsequently used for ATP formation. This is Photosystem II CP47 reaction center protein from Gossypium hirsutum (Upland cotton).